The chain runs to 839 residues: Molybdenum cofactor sulfurase (839 aa).

Lysine 237 is subject to N6-(pyridoxal phosphate)lysine. Cysteine 401 is a catalytic residue. Residues 651–662 (DQNYSQKQSPSM) are compositionally biased toward polar residues. The tract at residues 651–678 (DQNYSQKQSPSMPGSFPQAPSSPDPYPT) is disordered. Residues 656-834 (QKQSPSMPGS…IMVGDAVTPS (179 aa)) enclose the MOSC domain.

It belongs to the class-V pyridoxal-phosphate-dependent aminotransferase family. MOCOS subfamily. Requires pyridoxal 5'-phosphate as cofactor.

The catalysed reaction is Mo-molybdopterin + L-cysteine + AH2 = thio-Mo-molybdopterin + L-alanine + A + H2O. It functions in the pathway cofactor biosynthesis; molybdopterin biosynthesis. Sulfurates the molybdenum cofactor. Sulfation of molybdenum is essential for xanthine dehydrogenase (XDH) and aldehyde oxidase (ADO) enzymes in which molybdenum cofactor is liganded by 1 oxygen and 1 sulfur atom in active form. This chain is Molybdenum cofactor sulfurase, found in Emericella nidulans (strain FGSC A4 / ATCC 38163 / CBS 112.46 / NRRL 194 / M139) (Aspergillus nidulans).